The sequence spans 299 residues: Oxygen-dependent coproporphyrinogen-III oxidase (299 aa).

S92 is a substrate binding site. A divalent metal cation-binding residues include H96 and H106. The active-site Proton donor is H106. 108–110 provides a ligand contact to substrate; the sequence is NVR. 2 residues coordinate a divalent metal cation: H145 and H175. The important for dimerization stretch occupies residues 240–275; it reads YVEFNLVWDRGTLFGLQTGGRTESILMSMPPLVRWE. 258 to 260 contributes to the substrate binding site; that stretch reads GGR.

Belongs to the aerobic coproporphyrinogen-III oxidase family. Homodimer. A divalent metal cation is required as a cofactor.

The protein resides in the cytoplasm. It carries out the reaction coproporphyrinogen III + O2 + 2 H(+) = protoporphyrinogen IX + 2 CO2 + 2 H2O. It functions in the pathway porphyrin-containing compound metabolism; protoporphyrin-IX biosynthesis; protoporphyrinogen-IX from coproporphyrinogen-III (O2 route): step 1/1. Functionally, involved in the heme biosynthesis. Catalyzes the aerobic oxidative decarboxylation of propionate groups of rings A and B of coproporphyrinogen-III to yield the vinyl groups in protoporphyrinogen-IX. This Shigella boydii serotype 18 (strain CDC 3083-94 / BS512) protein is Oxygen-dependent coproporphyrinogen-III oxidase.